A 115-amino-acid chain; its full sequence is NAD(P)H-quinone oxidoreductase subunit M (115 aa).

Belongs to the complex I NdhM subunit family. NDH-1 can be composed of about 15 different subunits; different subcomplexes with different compositions have been identified which probably have different functions.

The protein localises to the cellular thylakoid membrane. The enzyme catalyses a plastoquinone + NADH + (n+1) H(+)(in) = a plastoquinol + NAD(+) + n H(+)(out). It catalyses the reaction a plastoquinone + NADPH + (n+1) H(+)(in) = a plastoquinol + NADP(+) + n H(+)(out). Its function is as follows. NDH-1 shuttles electrons from an unknown electron donor, via FMN and iron-sulfur (Fe-S) centers, to quinones in the respiratory and/or the photosynthetic chain. The immediate electron acceptor for the enzyme in this species is believed to be plastoquinone. Couples the redox reaction to proton translocation, and thus conserves the redox energy in a proton gradient. Cyanobacterial NDH-1 also plays a role in inorganic carbon-concentration. This chain is NAD(P)H-quinone oxidoreductase subunit M, found in Prochlorococcus marinus (strain MIT 9301).